Here is an 848-residue protein sequence, read N- to C-terminus: Neprilysin-11 (848 aa).

The Cytoplasmic segment spans residues 1–74 (MPFGNDPPDY…WWKSRTTMEK (74 aa)). A helical; Signal-anchor for type II membrane protein transmembrane segment spans residues 75-95 (LLLPVLLLFCLLTAVLLAVII). Residues 96-848 (NTDKRIEAMK…VNPDHKCIVW (753 aa)) lie on the Extracellular side of the membrane. The interval 108–161 (HATQTEHAGFGDPTENPTKTAEDPRVPPIVPEAPTSPEPEVTTSTEKPKEPEVC) is disordered. The segment covering 133 to 144 (VPPIVPEAPTSP) has biased composition (pro residues). One can recognise a Peptidase M13 domain in the interval 160-848 (VCSTPGCVRA…VNPDHKCIVW (689 aa)). An intrachain disulfide couples Cys-161 to Cys-166. Asn-178, Asn-249, Asn-284, Asn-312, Asn-337, Asn-364, Asn-398, and Asn-438 each carry an N-linked (GlcNAc...) asparagine glycan. Intrachain disulfides connect Cys-184–Cys-833, Cys-192–Cys-793, Cys-247–Cys-509, and Cys-719–Cys-845. Residue His-682 coordinates Zn(2+). Residue Glu-683 is part of the active site. His-686 is a Zn(2+) binding site. The N-linked (GlcNAc...) asparagine glycan is linked to Asn-726. Residue Glu-744 coordinates Zn(2+). The active-site Proton donor is the Asp-748.

This sequence belongs to the peptidase M13 family. It depends on Zn(2+) as a cofactor.

It localises to the cell membrane. In terms of biological role, probable cell surface protease. The sequence is that of Neprilysin-11 (nep-11) from Caenorhabditis elegans.